The chain runs to 575 residues: Phosphoenolpyruvate-protein phosphotransferase (575 aa).

H191 acts as the Tele-phosphohistidine intermediate in catalysis. Residues R298 and R334 each coordinate phosphoenolpyruvate. Residues E435 and D459 each coordinate Mg(2+). Residues 458–459 (ND) and R469 contribute to the phosphoenolpyruvate site. C506 acts as the Proton donor in catalysis.

The protein belongs to the PEP-utilizing enzyme family. In terms of assembly, homodimer. It depends on Mg(2+) as a cofactor.

The protein localises to the cytoplasm. It carries out the reaction L-histidyl-[protein] + phosphoenolpyruvate = N(pros)-phospho-L-histidyl-[protein] + pyruvate. Functionally, general (non sugar-specific) component of the phosphoenolpyruvate-dependent sugar phosphotransferase system (sugar PTS). This major carbohydrate active-transport system catalyzes the phosphorylation of incoming sugar substrates concomitantly with their translocation across the cell membrane. Enzyme I transfers the phosphoryl group from phosphoenolpyruvate (PEP) to the phosphoryl carrier protein (HPr). The polypeptide is Phosphoenolpyruvate-protein phosphotransferase (ptsI) (Lactococcus lactis subsp. cremoris (Streptococcus cremoris)).